The primary structure comprises 224 residues: Aminopyrimidine aminohydrolase (224 aa).

D44 contacts substrate. C135 functions as the Nucleophile in the catalytic mechanism. Positions 139 and 165 each coordinate substrate. E207 functions as the Proton donor in the catalytic mechanism.

The protein belongs to the TenA family. In terms of assembly, homotetramer.

The catalysed reaction is 4-amino-5-aminomethyl-2-methylpyrimidine + H2O = 4-amino-5-hydroxymethyl-2-methylpyrimidine + NH4(+). The enzyme catalyses thiamine + H2O = 5-(2-hydroxyethyl)-4-methylthiazole + 4-amino-5-hydroxymethyl-2-methylpyrimidine + H(+). Its pathway is cofactor biosynthesis; thiamine diphosphate biosynthesis. Catalyzes an amino-pyrimidine hydrolysis reaction at the C5' of the pyrimidine moiety of thiamine compounds, a reaction that is part of a thiamine salvage pathway. Thus, catalyzes the conversion of 4-amino-5-aminomethyl-2-methylpyrimidine to 4-amino-5-hydroxymethyl-2-methylpyrimidine (HMP). To a lesser extent, is also able to catalyze the hydrolytic cleavage of thiamine; however, this thiaminase activity is unlikely to be physiologically relevant. Therefore, is involved in the regeneration of the thiamine pyrimidine from thiamine degraded products present in the environment, rather than in thiamine degradation. This chain is Aminopyrimidine aminohydrolase, found in Halalkalibacterium halodurans (strain ATCC BAA-125 / DSM 18197 / FERM 7344 / JCM 9153 / C-125) (Bacillus halodurans).